Here is a 466-residue protein sequence, read N- to C-terminus: Methylenetetrahydrofolate--tRNA-(uracil-5-)-methyltransferase TrmFO (466 aa).

FAD is bound at residue 14-19; the sequence is GGGLAG.

Belongs to the MnmG family. TrmFO subfamily. FAD serves as cofactor.

The protein localises to the cytoplasm. It carries out the reaction uridine(54) in tRNA + (6R)-5,10-methylene-5,6,7,8-tetrahydrofolate + NADH + H(+) = 5-methyluridine(54) in tRNA + (6S)-5,6,7,8-tetrahydrofolate + NAD(+). The catalysed reaction is uridine(54) in tRNA + (6R)-5,10-methylene-5,6,7,8-tetrahydrofolate + NADPH + H(+) = 5-methyluridine(54) in tRNA + (6S)-5,6,7,8-tetrahydrofolate + NADP(+). Catalyzes the folate-dependent formation of 5-methyl-uridine at position 54 (M-5-U54) in all tRNAs. The chain is Methylenetetrahydrofolate--tRNA-(uracil-5-)-methyltransferase TrmFO from Brucella melitensis biotype 1 (strain ATCC 23456 / CCUG 17765 / NCTC 10094 / 16M).